Consider the following 170-residue polypeptide: Probable inosine/xanthosine triphosphatase (170 aa).

7–12 is a binding site for substrate; it reads TTNPVK. Mg(2+) is bound at residue D37.

This sequence belongs to the YjjX NTPase family. In terms of assembly, homodimer. Mg(2+) serves as cofactor. Requires Mn(2+) as cofactor.

The catalysed reaction is XTP + H2O = XDP + phosphate + H(+). It catalyses the reaction ITP + H2O = IDP + phosphate + H(+). In terms of biological role, phosphatase that hydrolyzes non-canonical purine nucleotides such as XTP and ITP to their respective diphosphate derivatives. Probably excludes non-canonical purines from DNA/RNA precursor pool, thus preventing their incorporation into DNA/RNA and avoiding chromosomal lesions. This Methanopyrus kandleri (strain AV19 / DSM 6324 / JCM 9639 / NBRC 100938) protein is Probable inosine/xanthosine triphosphatase.